Here is a 215-residue protein sequence, read N- to C-terminus: Thymidylate kinase (215 aa).

11-18 serves as a coordination point for ATP; that stretch reads GIDGAGKS.

It belongs to the thymidylate kinase family.

The enzyme catalyses dTMP + ATP = dTDP + ADP. In terms of biological role, phosphorylation of dTMP to form dTDP in both de novo and salvage pathways of dTTP synthesis. The sequence is that of Thymidylate kinase from Nitrosomonas europaea (strain ATCC 19718 / CIP 103999 / KCTC 2705 / NBRC 14298).